Reading from the N-terminus, the 1071-residue chain is DNA-directed RNA polymerase subunit beta (1071 aa).

This sequence belongs to the RNA polymerase beta chain family. In terms of assembly, in plastids the minimal PEP RNA polymerase catalytic core is composed of four subunits: alpha, beta, beta', and beta''. When a (nuclear-encoded) sigma factor is associated with the core the holoenzyme is formed, which can initiate transcription.

It localises to the plastid. It is found in the chloroplast. The catalysed reaction is RNA(n) + a ribonucleoside 5'-triphosphate = RNA(n+1) + diphosphate. DNA-dependent RNA polymerase catalyzes the transcription of DNA into RNA using the four ribonucleoside triphosphates as substrates. The chain is DNA-directed RNA polymerase subunit beta from Acorus gramineus (Dwarf sweet flag).